We begin with the raw amino-acid sequence, 757 residues long: 5-methyltetrahydropteroyltriglutamate--homocysteine methyltransferase (757 aa).

Residues 15-18 and Lys114 each bind 5-methyltetrahydropteroyltri-L-glutamate; that span reads RELK. Residues 428–430 and Glu481 each bind L-homocysteine; that span reads IGS. L-methionine-binding positions include 428 to 430 and Glu481; that span reads IGS. 5-methyltetrahydropteroyltri-L-glutamate-binding positions include 512–513 and Trp558; that span reads RC. Residue Asp596 coordinates L-homocysteine. Asp596 lines the L-methionine pocket. Glu602 is a binding site for 5-methyltetrahydropteroyltri-L-glutamate. The Zn(2+) site is built by His639, Cys641, and Glu663. The active-site Proton donor is His692. Cys724 is a Zn(2+) binding site.

The protein belongs to the vitamin-B12 independent methionine synthase family. Zn(2+) is required as a cofactor.

It catalyses the reaction 5-methyltetrahydropteroyltri-L-glutamate + L-homocysteine = tetrahydropteroyltri-L-glutamate + L-methionine. It functions in the pathway amino-acid biosynthesis; L-methionine biosynthesis via de novo pathway; L-methionine from L-homocysteine (MetE route): step 1/1. Catalyzes the transfer of a methyl group from 5-methyltetrahydrofolate to homocysteine resulting in methionine formation. The sequence is that of 5-methyltetrahydropteroyltriglutamate--homocysteine methyltransferase from Lactococcus lactis subsp. cremoris (strain MG1363).